The primary structure comprises 197 residues: NADH-quinone oxidoreductase subunit C (197 aa).

It belongs to the complex I 30 kDa subunit family. As to quaternary structure, NDH-1 is composed of 14 different subunits. Subunits NuoB, C, D, E, F, and G constitute the peripheral sector of the complex.

Its subcellular location is the cell inner membrane. It catalyses the reaction a quinone + NADH + 5 H(+)(in) = a quinol + NAD(+) + 4 H(+)(out). Its function is as follows. NDH-1 shuttles electrons from NADH, via FMN and iron-sulfur (Fe-S) centers, to quinones in the respiratory chain. The immediate electron acceptor for the enzyme in this species is believed to be ubiquinone. Couples the redox reaction to proton translocation (for every two electrons transferred, four hydrogen ions are translocated across the cytoplasmic membrane), and thus conserves the redox energy in a proton gradient. The chain is NADH-quinone oxidoreductase subunit C from Rickettsia typhi (strain ATCC VR-144 / Wilmington).